Here is a 786-residue protein sequence, read N- to C-terminus: Pentatricopeptide repeat-containing protein 10, chloroplastic (786 aa).

Residues 1–71 (MEATGRGLFP…HQTPTPPHSF (71 aa)) form a disordered region. The N-terminal 95 residues, 1 to 95 (MEATGRGLFP…HPLPTLAAFL (95 aa)), are a transit peptide targeting the chloroplast. Positions 27-36 (PAAPPPPSPS) are enriched in pro residues. The span at 37–50 (SLPLDSLLLHLTAP) shows a compositional bias: low complexity. PPR repeat units follow at residues 137–167 (DASA…TPLP), 173–207 (DVRA…GVAP), 208–243 (TLVT…GVEP), 244–278 (DGFT…GHAP), 279–313 (CVVT…GCQP), 314–348 (DAVT…GLLP), 349–383 (NAFT…GFVP), 384–418 (NVNT…GCTP), 419–453 (NRVT…GVEL), 454–488 (SRDT…GFTP), 489–523 (CITT…GFKP), 524–558 (NEQS…GAVF), 560–594 (SWVI…GYNP), 595–629 (DLVI…GLSP), 630–664 (DLIT…QTMK), 666–700 (DVVS…GMAP), 701–735 (CAVT…GLKP), and 736–770 (MELT…DLDF).

Belongs to the PPR family. P subfamily. Forms homodimers.

Its subcellular location is the plastid. It is found in the chloroplast stroma. Its function is as follows. Involved in chloroplast mRNA stability. Binds specifically to two intergenic RNA regions of similar sequence located in the chloroplast atpH 5'-UTR and psaJ 3'-UTR, and serves as a barrier to RNA decay. Binding to a specific site in the intergenic region of the chloroplast atpH is sufficient to block 5'-3' and 3'-5' exonucleases. Acts as a protein barrier to block mRNA degradation by exonucleases, and defines processed mRNA termini in chloroplasts. Remodels the structure of the atpH ribosome-binding site in a manner that can account for its ability to enhance translation. Stabilizes a RNA 3'-end downstream from psaI. Binds atpH RNA as a monomer. This Zea mays (Maize) protein is Pentatricopeptide repeat-containing protein 10, chloroplastic.